A 48-amino-acid polypeptide reads, in one-letter code: M-oxotoxin-Ot1c (48 aa).

The protein resides in the secreted. Its subcellular location is the target cell membrane. Disrupts cell membranes, particularly those rich in phosphocholine, through formation of pores. Has antimicrobial activity, hemolytic activity and insecticidal activity. The protein is M-oxotoxin-Ot1c of Oxyopes takobius (Lynx spider).